The following is a 338-amino-acid chain: O-methyltransferase 4 (338 aa).

Residues glycine 184, aspartate 207, asparagine 230, phenylalanine 231, lysine 244, and arginine 245 each contribute to the S-adenosyl-L-methionine site. Histidine 248 serves as the catalytic Proton acceptor.

It belongs to the class I-like SAM-binding methyltransferase superfamily. Cation-independent O-methyltransferase family. COMT subfamily.

The enzyme catalyses (3,5-dichloro-2,4,6-trihydroxyphenyl)hexan-1-one + S-adenosyl-L-methionine = 1-(3,5-dichloro-2,6-dihydroxy-4-methoxyphenyl)hexan-1-one + S-adenosyl-L-homocysteine + H(+). The protein is O-methyltransferase 4 (omt4) of Dictyostelium discoideum (Social amoeba).